The primary structure comprises 631 residues: MVRFVSILSLFGCAATLVTAHDDMDMDMDMDMDMDMNIDTTTSQSIDVSSTASIVPVPHEPKHLHGLPILQSPSLTPAERLYWENYNTTTYFTTQAGNRSALRYHIITLLLVAFVLYPVSLALSAARSRWYLPLLFVNLCICISSVMALSVFKNTFPEEDWYAHNIYGTTSVLLLVFMLVHFFAAVLSVPVSLASKKEYRPVDTIPLNDLESTPVMVNSARGSPSPSSNRDTLFSLSSDTTTATATNNNKRRRAEGEDEGDNTSNHDTLRDEDYDNDDDEIASIEAPPLLPQDIPVFRILFTNTKYQMLAAHLSCVANVVFHMLTYPLFMYIFVDLIIGFAVGNLLGKGIRIFNLLAHWIKGGVFFTLGVVSLARYCGFAAKYGWAWNNISFTSQLTQTRSSNLLFRFAPAGTFTMEFVESFLIFFYGSTNIFLEHLAGNGGAWTAKDLQHVSIAFMFIGTGLCGLLTEYKLNHWRFEHARKRPQTDVVAATPGYSPNPFPAFTIFWTGILMSQHAQSSQFSTTIHTQWGYLLSYGSFFRLLTFLILFLVPNTNSAASKPFTELITSFCLLCGGLVFMESTDQSIEAMEYRGFTPMFTFNLSVGFVSLLMAWEMILFIWKDWLIKTRKTSL.

The signal sequence occupies residues 1-20 (MVRFVSILSLFGCAATLVTA). The Lumenal portion of the chain corresponds to 21-105 (HDDMDMDMDM…AGNRSALRYH (85 aa)). Residues asparagine 87 and asparagine 98 are each glycosylated (N-linked (GlcNAc...) asparagine). The helical transmembrane segment at 106-126 (IITLLLVAFVLYPVSLALSAA) threads the bilayer. The Cytoplasmic portion of the chain corresponds to 127–131 (RSRWY). A helical membrane pass occupies residues 132–152 (LPLLFVNLCICISSVMALSVF). The Lumenal portion of the chain corresponds to 153–170 (KNTFPEEDWYAHNIYGTT). A helical transmembrane segment spans residues 171–191 (SVLLLVFMLVHFFAAVLSVPV). The Cytoplasmic segment spans residues 192-322 (SLASKKEYRP…LSCVANVVFH (131 aa)). Residues 216–274 (MVNSARGSPSPSSNRDTLFSLSSDTTTATATNNNKRRRAEGEDEGDNTSNHDTLRDEDY) are disordered. Serine 219 carries the post-translational modification Phosphoserine. The span at 220–239 (ARGSPSPSSNRDTLFSLSSD) shows a compositional bias: polar residues. Lysine 250 participates in a covalent cross-link: Glycyl lysine isopeptide (Lys-Gly) (interchain with G-Cter in ubiquitin). Residues 323-343 (MLTYPLFMYIFVDLIIGFAVG) traverse the membrane as a helical segment. Residues 344 to 351 (NLLGKGIR) are Lumenal-facing. Residues 352 to 372 (IFNLLAHWIKGGVFFTLGVVS) traverse the membrane as a helical segment. The Cytoplasmic segment spans residues 373-407 (LARYCGFAAKYGWAWNNISFTSQLTQTRSSNLLFR). The helical transmembrane segment at 408–428 (FAPAGTFTMEFVESFLIFFYG) threads the bilayer. At 429–451 (STNIFLEHLAGNGGAWTAKDLQH) the chain is on the lumenal side. Residues 452–472 (VSIAFMFIGTGLCGLLTEYKL) form a helical membrane-spanning segment. Over 473 to 529 (NHWRFEHARKRPQTDVVAATPGYSPNPFPAFTIFWTGILMSQHAQSSQFSTTIHTQW) the chain is Cytoplasmic. The helical transmembrane segment at 530–550 (GYLLSYGSFFRLLTFLILFLV) threads the bilayer. Residues 551–598 (PNTNSAASKPFTELITSFCLLCGGLVFMESTDQSIEAMEYRGFTPMFT) lie on the Lumenal side of the membrane. Residues 599–619 (FNLSVGFVSLLMAWEMILFIW) form a helical membrane-spanning segment. Over 620–631 (KDWLIKTRKTSL) the chain is Cytoplasmic.

The protein to S.pombe SpBC3B8.06.

The protein resides in the membrane. This is an uncharacterized protein from Saccharomyces cerevisiae (strain ATCC 204508 / S288c) (Baker's yeast).